The sequence spans 536 residues: Metal transporter Nramp2 (536 aa).

Residues 1 to 37 form a disordered region; that stretch reads MSSPSGGEDSKDDEKDEESNRLLPLSSSSQSQSLQSE. Positions 22 to 36 are enriched in low complexity; that stretch reads LLPLSSSSQSQSLQS. N-linked (GlcNAc...) asparagine glycosylation occurs at Asn-38. 12 consecutive transmembrane segments (helical) span residues 76–96, 104–124, 161–181, 185–205, 213–233, 259–279, 305–325, 347–367, 400–420, 435–455, 465–485, and 492–512; these read LWLF…PGNL, AIAG…GLLI, VALI…IQIL, FLPL…FLFL, LEGV…WMCG, AVGV…SALV, VALF…AKGF, YGGG…AAGQ, SFAI…EASL, IPFA…MGVF, AWTI…DFFI, and LFGF…IYLV.

Belongs to the NRAMP (TC 2.A.55) family.

Its subcellular location is the membrane. Its function is as follows. Probable divalent metal transporter. The polypeptide is Metal transporter Nramp2 (Populus trichocarpa (Western balsam poplar)).